Consider the following 149-residue polypeptide: UPF0178 protein Pmen_0294 (149 aa).

Belongs to the UPF0178 family.

The chain is UPF0178 protein Pmen_0294 from Ectopseudomonas mendocina (strain ymp) (Pseudomonas mendocina).